The sequence spans 345 residues: MKVAVLPGDGIGPEVTEAALKVLRALDEAEGLGLAYEVFPFGGAAIDAFGEPFPEPTRKGVEEAEAVLLGSVGGPKWDGLPRKIRPETGLLSLRKSQDLFANLRPAKVFPGLERLSPLKEEIARGVDVLIVRELTGGIYFGEPRGMSEAEAWNTERYSKPEVERVARVAFEAARKRRKHVVSVDKANVLEVGEFWRKTVEEVGRGYPDVALEHQYVDAMAMHLVRSPARFDVVVTGNIFGDILSDLASVLPGSLGLLPSASLGRGTPVFEPVHGSAPDIAGKGLANPTAAILSAAMMLEHAFGLVELARKVEDAVAKALLEAPPPDLGGSAGTEAFTATVLRHLA.

74–87 (GPKWDGLPRKIRPE) lines the NAD(+) pocket. Substrate is bound by residues arginine 94, arginine 104, arginine 132, and aspartate 217. Positions 217, 241, and 245 each coordinate Mg(2+). An NAD(+)-binding site is contributed by 274–286 (GSAPDIAGKGLAN).

This sequence belongs to the isocitrate and isopropylmalate dehydrogenases family. LeuB type 1 subfamily. As to quaternary structure, homodimer. Mg(2+) serves as cofactor. It depends on Mn(2+) as a cofactor.

It localises to the cytoplasm. The enzyme catalyses (2R,3S)-3-isopropylmalate + NAD(+) = 4-methyl-2-oxopentanoate + CO2 + NADH. The protein operates within amino-acid biosynthesis; L-leucine biosynthesis; L-leucine from 3-methyl-2-oxobutanoate: step 3/4. In terms of biological role, catalyzes the oxidation of 3-carboxy-2-hydroxy-4-methylpentanoate (3-isopropylmalate) to 3-carboxy-4-methyl-2-oxopentanoate. The product decarboxylates to 4-methyl-2 oxopentanoate. This chain is 3-isopropylmalate dehydrogenase (leuB), found in Thermus thermophilus (strain ATCC BAA-163 / DSM 7039 / HB27).